We begin with the raw amino-acid sequence, 23 residues long: Putative gene 50 protein (23 aa).

This chain is Putative gene 50 protein (50), found in Bacillus subtilis (Bacteriophage SP01).